Reading from the N-terminus, the 556-residue chain is 2-succinyl-5-enolpyruvyl-6-hydroxy-3-cyclohexene-1-carboxylate synthase (556 aa).

It belongs to the TPP enzyme family. MenD subfamily. Homodimer. Mg(2+) serves as cofactor. The cofactor is Mn(2+). It depends on thiamine diphosphate as a cofactor.

The enzyme catalyses isochorismate + 2-oxoglutarate + H(+) = 5-enolpyruvoyl-6-hydroxy-2-succinyl-cyclohex-3-ene-1-carboxylate + CO2. Its pathway is quinol/quinone metabolism; 1,4-dihydroxy-2-naphthoate biosynthesis; 1,4-dihydroxy-2-naphthoate from chorismate: step 2/7. It functions in the pathway quinol/quinone metabolism; menaquinone biosynthesis. Functionally, catalyzes the thiamine diphosphate-dependent decarboxylation of 2-oxoglutarate and the subsequent addition of the resulting succinic semialdehyde-thiamine pyrophosphate anion to isochorismate to yield 2-succinyl-5-enolpyruvyl-6-hydroxy-3-cyclohexene-1-carboxylate (SEPHCHC). This Escherichia coli (strain 55989 / EAEC) protein is 2-succinyl-5-enolpyruvyl-6-hydroxy-3-cyclohexene-1-carboxylate synthase.